A 305-amino-acid chain; its full sequence is UDP-3-O-acyl-N-acetylglucosamine deacetylase (305 aa).

The Zn(2+) site is built by His78, His237, and Asp241. Residue His264 is the Proton donor of the active site.

It belongs to the LpxC family. The cofactor is Zn(2+).

It carries out the reaction a UDP-3-O-[(3R)-3-hydroxyacyl]-N-acetyl-alpha-D-glucosamine + H2O = a UDP-3-O-[(3R)-3-hydroxyacyl]-alpha-D-glucosamine + acetate. It functions in the pathway glycolipid biosynthesis; lipid IV(A) biosynthesis; lipid IV(A) from (3R)-3-hydroxytetradecanoyl-[acyl-carrier-protein] and UDP-N-acetyl-alpha-D-glucosamine: step 2/6. Functionally, catalyzes the hydrolysis of UDP-3-O-myristoyl-N-acetylglucosamine to form UDP-3-O-myristoylglucosamine and acetate, the committed step in lipid A biosynthesis. In Burkholderia multivorans (strain ATCC 17616 / 249), this protein is UDP-3-O-acyl-N-acetylglucosamine deacetylase.